Here is a 155-residue protein sequence, read N- to C-terminus: MLITSSRKPSANTRTMCKYLASFFNCKYMTRGKMGLIDIVSLCENGLLMVVGDYHGSPGSIMFYDSHGVELLSIHLSVFYPDGYKYTPLKALEPSINGDGELFNLLSYYLDIPEGECYYDSKCLIASDDHLEFVYLDNMLFRLNIKNYRKMVMSE.

The Brix domain occupies 1–155; the sequence is MLITSSRKPS…KNYRKMVMSE (155 aa).

Probably involved in the biogenesis of the ribosome. This is Probable Brix domain-containing ribosomal biogenesis protein from Methanococcoides burtonii (strain DSM 6242 / NBRC 107633 / OCM 468 / ACE-M).